The primary structure comprises 21 residues: Bombinin-H4 (21 aa).

Ile2 carries the post-translational modification D-allo-isoleucine. At Ile20 the chain carries Isoleucine amide.

Belongs to the bombinin family. In terms of tissue distribution, expressed by the skin glands.

The protein resides in the secreted. Functionally, has antimicrobial and hemolytic activities. This is Bombinin-H4 from Bombina variegata (Yellow-bellied toad).